Reading from the N-terminus, the 750-residue chain is MIIRSPEPEVKILVDRDPIKTSFEEWAKPGHFSRTIAKGPDTTTWIWNLHADAHDFDSHTSDLEEISRKVFSAHFGQLSIIFLWLSGMYFHGARFSNYEAWLSDPTHIGPSAQVVWPIVGQEILNGDVGGGFRGIQITSGFFQIWRASGITSELQLYCTAIGALVFAALMLFAGWFHYHKAAPKLAWFQDVESMLNHHLAGLLGLGSLSWAGHQVHVSLPINQFLNAGVDPKEIPLPHEFILNRDLLAQLYPSFAEGATPFFTLNWSKYSEFLTFRGGLDPVTGGLWLTDIAHHHLAIAILFLIAGHMYRTNWGIGHGIKDILEAHKGPFTGQGHKGLYEILTTSWHAQLSLNLAMLGSLTIIVAHHMYSMPPYPYLATDYATQLSLFTHHMWIGGFLIVGAAAHAAIFMVRDYDPTNRYNDLLDRVLRHRDAIISHLNWVCIFLGFHSFGLYIHNDTMSALGRPQDMFSDTAIQLQPVFAQWIQNTHALAPGVTAPGETASTSLTWGGGELVAVGGKVALLPIPLGTADFLVHHIHAFTIHVTVLILLKGVLFARSSRLIPDKANLGFRFPCDGPGRGGTCQVSAWDHVFLGLFWMYNAISVVIFHFSWKMQSDVWGSISDQGVVTHITGGNFAQSSITINGWLRDFLWAQASQVIQSYGSSLSAYGLFFLGAHFVWAFSLMFLFSGRGYWQELIESIVWAHNKLKVAPATQPRALSIVQGRAVGVTHYLLGGIATTWAFFLARIIAVG.

8 consecutive transmembrane segments (helical) span residues 70 to 93, 156 to 179, 195 to 219, 291 to 309, 346 to 369, 385 to 411, 433 to 455, and 531 to 549; these read VFSAHFGQLSIIFLWLSGMYFHGA, LYCTAIGALVFAALMLFAGWFHYH, LNHHLAGLLGLGSLSWAGHQVHVSL, IAHHHLAIAILFLIAGHMY, WHAQLSLNLAMLGSLTIIVAHHMY, LSLFTHHMWIGGFLIVGAAAHAAIFMV, AIISHLNWVCIFLGFHSFGLYIH, and FLVHHIHAFTIHVTVLILL. [4Fe-4S] cluster-binding residues include Cys573 and Cys582. A run of 2 helical transmembrane segments spans residues 589–610 and 664–686; these read HVFLGLFWMYNAISVVIFHFSW and LSAYGLFFLGAHFVWAFSLMFLF. His675 provides a ligand contact to chlorophyll a'. Met683 and Tyr691 together coordinate chlorophyll a. Trp692 contacts phylloquinone. A helical membrane pass occupies residues 724–744; that stretch reads AVGVTHYLLGGIATTWAFFLA.

It belongs to the PsaA/PsaB family. As to quaternary structure, the PsaA/B heterodimer binds the P700 chlorophyll special pair and subsequent electron acceptors. PSI consists of a core antenna complex that captures photons, and an electron transfer chain that converts photonic excitation into a charge separation. The eukaryotic PSI reaction center is composed of at least 11 subunits. It depends on P700 is a chlorophyll a/chlorophyll a' dimer, A0 is one or more chlorophyll a, A1 is one or both phylloquinones and FX is a shared 4Fe-4S iron-sulfur center. as a cofactor.

It localises to the plastid. It is found in the chloroplast thylakoid membrane. The catalysed reaction is reduced [plastocyanin] + hnu + oxidized [2Fe-2S]-[ferredoxin] = oxidized [plastocyanin] + reduced [2Fe-2S]-[ferredoxin]. In terms of biological role, psaA and PsaB bind P700, the primary electron donor of photosystem I (PSI), as well as the electron acceptors A0, A1 and FX. PSI is a plastocyanin-ferredoxin oxidoreductase, converting photonic excitation into a charge separation, which transfers an electron from the donor P700 chlorophyll pair to the spectroscopically characterized acceptors A0, A1, FX, FA and FB in turn. Oxidized P700 is reduced on the lumenal side of the thylakoid membrane by plastocyanin. The sequence is that of Photosystem I P700 chlorophyll a apoprotein A1 from Olimarabidopsis pumila (Dwarf rocket).